The chain runs to 151 residues: Large ribosomal subunit protein eL8 (151 aa).

Belongs to the eukaryotic ribosomal protein eL8 family. Part of the 50S ribosomal subunit. Probably part of the RNase P complex.

The protein resides in the cytoplasm. Functionally, multifunctional RNA-binding protein that recognizes the K-turn motif in ribosomal RNA, the RNA component of RNase P, box H/ACA, box C/D and box C'/D' sRNAs. The sequence is that of Large ribosomal subunit protein eL8 from Pyrobaculum aerophilum (strain ATCC 51768 / DSM 7523 / JCM 9630 / CIP 104966 / NBRC 100827 / IM2).